The sequence spans 444 residues: MVRRQEEEKKAEKGMRLGKYELGRTLGEGNFGKVKFAKDTVSGHSFAVKIIDKSRIADLNFSLQIKREIRTLKMLKHPHIVRLHEVLASKTKINMVMELVTGGELFDRIVSNGKLTETDGRKMFQQLIDGISYCHSKGVFHRDLKLENVLLDAKGHIKITDFGLSALPQHFRDDGLLHTTCGSPNYVAPEVLANRGYDGAASDIWSCGVILYVILTGCLPFDDRNLAVLYQKICKGDPPIPRWLSPGARTMIKRMLDPNPVTRITVVGIKASEWFKLEYIPSIPDDDDEEEVDTDDDAFSIQELGSEEGKGSDSPTIINAFQLIGMSSFLDLSGFFEQENVSERRIRFTSNSSAKDLLEKIETAVTEMGFSVQKKHAKLRVKQEERNQKGQVGLSVTAEVFEIKPSLNVVELRKSYGDSCLYRQLYERLLKDVGTSSPEQEIVT.

Positions 20–275 (YELGRTLGEG…VVGIKASEWF (256 aa)) constitute a Protein kinase domain. Residues 26–34 (LGEGNFGKV) and Lys-49 each bind ATP. Asp-143 (proton acceptor) is an active-site residue. The tract at residues 161–190 (DFGLSALPQHFRDDGLLHTTCGSPNYVAPE) is activation loop. Ser-165 is modified (phosphoserine). The residue at position 179 (Thr-179) is a Phosphothreonine. The NAF domain maps to 313 to 337 (DSPTIINAFQLIGMSSFLDLSGFFE). The segment at 343–372 (ERRIRFTSNSSAKDLLEKIETAVTEMGFSV) is PPI.

Belongs to the protein kinase superfamily. CAMK Ser/Thr protein kinase family. SNF1 subfamily. Interacts with CBL1. Interacts with CBL2. Interacts with CBL3. Interacts with CBL9. Interacts with ECT1 and ECT2. Requires Mn(2+) as cofactor. In terms of processing, autophosphorylated. Ubiquitous.

The catalysed reaction is L-seryl-[protein] + ATP = O-phospho-L-seryl-[protein] + ADP + H(+). It carries out the reaction L-threonyl-[protein] + ATP = O-phospho-L-threonyl-[protein] + ADP + H(+). CIPK serine-threonine protein kinases interact with CBL proteins. Binding of a CBL protein to the regulatory NAF domain of CIPK protein lead to the activation of the kinase in a calcium-dependent manner. The protein is CBL-interacting serine/threonine-protein kinase 1 (CIPK1) of Arabidopsis thaliana (Mouse-ear cress).